Consider the following 328-residue polypeptide: Tyrosine recombinase XerC (328 aa).

Residues 13-100 (QAPHPQIAAY…AWRGWFKWMA (88 aa)) form the Core-binding (CB) domain. In terms of domain architecture, Tyr recombinase spans 122–319 (RLPKALSVEQ…DFQHLAKIYD (198 aa)). Catalysis depends on residues arginine 162, lysine 197, histidine 271, arginine 274, and histidine 297. Tyrosine 306 serves as the catalytic O-(3'-phospho-DNA)-tyrosine intermediate.

Belongs to the 'phage' integrase family. XerC subfamily. In terms of assembly, forms a cyclic heterotetrameric complex composed of two molecules of XerC and two molecules of XerD.

It is found in the cytoplasm. In terms of biological role, site-specific tyrosine recombinase, which acts by catalyzing the cutting and rejoining of the recombining DNA molecules. The XerC-XerD complex is essential to convert dimers of the bacterial chromosome into monomers to permit their segregation at cell division. It also contributes to the segregational stability of plasmids. The polypeptide is Tyrosine recombinase XerC (Ralstonia pickettii (strain 12J)).